The sequence spans 70 residues: ATP synthase subunit c (70 aa).

The next 2 helical transmembrane spans lie at 4-24 and 45-65; these read IAAA…NGLI and LMFI…VIAF.

Belongs to the ATPase C chain family. In terms of assembly, F-type ATPases have 2 components, F(1) - the catalytic core - and F(0) - the membrane proton channel. F(1) has five subunits: alpha(3), beta(3), gamma(1), delta(1), epsilon(1). F(0) has three main subunits: a(1), b(2) and c(10-14). The alpha and beta chains form an alternating ring which encloses part of the gamma chain. F(1) is attached to F(0) by a central stalk formed by the gamma and epsilon chains, while a peripheral stalk is formed by the delta and b chains.

The protein localises to the cell membrane. F(1)F(0) ATP synthase produces ATP from ADP in the presence of a proton or sodium gradient. F-type ATPases consist of two structural domains, F(1) containing the extramembraneous catalytic core and F(0) containing the membrane proton channel, linked together by a central stalk and a peripheral stalk. During catalysis, ATP synthesis in the catalytic domain of F(1) is coupled via a rotary mechanism of the central stalk subunits to proton translocation. The sequence is that of ATP synthase subunit c from Bacillus pumilus (strain SAFR-032).